A 353-amino-acid chain; its full sequence is Variable large protein 12 (353 aa).

The signal sequence occupies residues 1–18 (MRKRISAIIMTLFMVLAS). Cys19 is lipidated: N-palmitoyl cysteine. A lipid anchor (S-diacylglycerol cysteine) is attached at Cys19.

Belongs to the variable large protein (Vlp) family. Beta subfamily.

The protein localises to the cell outer membrane. Functionally, the Vlp and Vsp proteins are antigenically distinct proteins, only one vlp or vsp gene is transcriptionally active at any one time. Switching between these genes is a mechanism of host immune response evasion. The sequence is that of Variable large protein 12 from Borrelia hermsii.